Here is a 230-residue protein sequence, read N- to C-terminus: Lipoprotein-releasing system ATP-binding protein LolD (230 aa).

Positions L10–L228 constitute an ABC transporter domain. Position 46–53 (G46–S53) interacts with ATP.

This sequence belongs to the ABC transporter superfamily. Lipoprotein translocase (TC 3.A.1.125) family. As to quaternary structure, the complex is composed of two ATP-binding proteins (LolD) and two transmembrane proteins (LolC and LolE).

It localises to the cell inner membrane. Functionally, part of the ABC transporter complex LolCDE involved in the translocation of mature outer membrane-directed lipoproteins, from the inner membrane to the periplasmic chaperone, LolA. Responsible for the formation of the LolA-lipoprotein complex in an ATP-dependent manner. In Bordetella avium (strain 197N), this protein is Lipoprotein-releasing system ATP-binding protein LolD.